We begin with the raw amino-acid sequence, 76 residues long: uncharacterized protein (76 aa).

The protein localises to the plastid. This is an uncharacterized protein from Euglena longa (Euglenophycean alga).